The sequence spans 205 residues: Small ribosomal subunit protein bS16 (205 aa).

A disordered region spans residues 110–205; the sequence is GEEVKIAVGT…ADDNEEPEDE (96 aa). Residues 123 to 132 show a composition bias toward basic and acidic residues; the sequence is DPLERERERA. A compositionally biased stretch (acidic residues) spans 153 to 205; sequence EETEAEEAEDVETADAEDADAASETDEPEAAADEADETDASADADDNEEPEDE.

The protein belongs to the bacterial ribosomal protein bS16 family.

The sequence is that of Small ribosomal subunit protein bS16 from Salinibacter ruber (strain DSM 13855 / M31).